The chain runs to 82 residues: uncharacterized protein (82 aa).

Residues 1–19 (MKNLLKILLIIAFANPVFA) form the signal peptide.

This is an uncharacterized protein from Rickettsia prowazekii (strain Madrid E).